Consider the following 441-residue polypeptide: MFS-type transporter (441 aa).

Residues 1–47 are disordered; the sequence is MPPQQEQDTDSDAIRSYNEESKSETPGCIPDAMLSSDETSNDVASDI. A run of 10 helical transmembrane segments spans residues 61-81, 95-115, 125-145, 150-170, 183-203, 212-232, 259-279, 289-309, 323-343, and 351-371; these read TLCG…FGIF, DISW…AFVG, LVLS…SLST, LILS…TPAV, LAIG…NSMA, FGWT…FVVV, FFTI…YYIA, TLTY…GVFG, LELL…WIAV, and VWTV…PAGI. An N-linked (GlcNAc...) asparagine glycan is attached at Asn388. 2 consecutive transmembrane segments (helical) span residues 389 to 409 and 415 to 435; these read FTVI…IITA and YGAQ…IVAA.

The protein belongs to the major facilitator superfamily. Monocarboxylate porter (TC 2.A.1.13) family.

Its subcellular location is the membrane. In terms of biological role, MFS-type transporter; part of the gene cluster that mediates the biosynthesis of butenolide, a mycotoxin that shows antibiotic activity but does not seem to play a major role in the spread of head blight in wheat. The sequence is that of MFS-type transporter from Gibberella zeae (strain ATCC MYA-4620 / CBS 123657 / FGSC 9075 / NRRL 31084 / PH-1) (Wheat head blight fungus).